We begin with the raw amino-acid sequence, 545 residues long: Calcium-binding mitochondrial carrier SAL1 (545 aa).

One can recognise an EF-hand 1 domain in the interval 11–46 (QRDIRYACLFKELDVKGNGQVTLDNLISAFEKNDHP). Ca(2+)-binding residues include Lys65, Asp70, Asp93, Asp95, Asp97, Lys99, and Glu104. EF-hand domains follow at residues 80-115 (NAES…LDNQ), 120-155 (NELN…RGQA), and 156-191 (SHKK…VPRK). Positions 161 and 166 each coordinate Ca(2+). 3 Solcar repeats span residues 225–332 (IRGF…TKKI), 345–434 (LSKF…LKKW), and 452–541 (LSNL…LKKF). Helical transmembrane passes span 231–248 (FIAG…TAPF), 307–326 (GNGL…FGSF), 355–368 (GLAG…VYPI), 409–428 (GVTV…LGTF), 458–475 (LPMG…VYPI), and 516–535 (GLVP…YLCY).

Belongs to the mitochondrial carrier (TC 2.A.29) family.

It is found in the mitochondrion inner membrane. Functionally, calcium-dependent mitochondrial solute carrier. The polypeptide is Calcium-binding mitochondrial carrier SAL1 (SAL1) (Saccharomyces cerevisiae (Baker's yeast)).